The following is a 139-amino-acid chain: Phosphoribosyl-AMP cyclohydrolase (139 aa).

D91 provides a ligand contact to Mg(2+). C92 serves as a coordination point for Zn(2+). Residues D93 and D95 each contribute to the Mg(2+) site. Residues C110 and C117 each coordinate Zn(2+).

This sequence belongs to the PRA-CH family. In terms of assembly, homodimer. Requires Mg(2+) as cofactor. Zn(2+) serves as cofactor.

It localises to the cytoplasm. The enzyme catalyses 1-(5-phospho-beta-D-ribosyl)-5'-AMP + H2O = 1-(5-phospho-beta-D-ribosyl)-5-[(5-phospho-beta-D-ribosylamino)methylideneamino]imidazole-4-carboxamide. The protein operates within amino-acid biosynthesis; L-histidine biosynthesis; L-histidine from 5-phospho-alpha-D-ribose 1-diphosphate: step 3/9. Its function is as follows. Catalyzes the hydrolysis of the adenine ring of phosphoribosyl-AMP. The sequence is that of Phosphoribosyl-AMP cyclohydrolase from Brucella canis (strain ATCC 23365 / NCTC 10854 / RM-666).